We begin with the raw amino-acid sequence, 173 residues long: Co-chaperone protein HscB homolog (173 aa).

In terms of domain architecture, J spans 5–77; that stretch reads CHFALFDLQP…PRRARYLLAI (73 aa).

Belongs to the HscB family. As to quaternary structure, interacts with HscA and stimulates its ATPase activity.

In terms of biological role, co-chaperone involved in the maturation of iron-sulfur cluster-containing proteins. Seems to help targeting proteins to be folded toward HscA. This is Co-chaperone protein HscB homolog from Pseudomonas putida (strain W619).